The chain runs to 720 residues: Transcription factor bHLH155 (720 aa).

Positions 522–534 (YPSSSSDQFQTSL) are enriched in polar residues. The disordered stretch occupies residues 522–558 (YPSSSSDQFQTSLDIPKKNKKRAKPGESSRPRPRDRQ). A Nuclear localization signal motif is present at residues 540–547 (NKKRAKPG). One can recognise a bHLH domain in the interval 544–593 (AKPGESSRPRPRDRQLIQDRIKELRELVPNGSKCSIDSLLERTIKHMLFL). Positions 545–558 (KPGESSRPRPRDRQ) are enriched in basic and acidic residues.

Belongs to the bHLH protein family. LHW subfamily. In terms of assembly, homodimer.

Its subcellular location is the nucleus. Transcription factor that may regulate root development. The polypeptide is Transcription factor bHLH155 (BHLH155) (Arabidopsis thaliana (Mouse-ear cress)).